A 328-amino-acid polypeptide reads, in one-letter code: Beta-ketoacyl-[acyl-carrier-protein] synthase III (328 aa).

Catalysis depends on residues Cys113 and His252. Residues 253–257 (QANLR) are ACP-binding. Residue Asn282 is part of the active site.

It belongs to the thiolase-like superfamily. FabH family. As to quaternary structure, homodimer.

Its subcellular location is the cytoplasm. The catalysed reaction is malonyl-[ACP] + acetyl-CoA + H(+) = 3-oxobutanoyl-[ACP] + CO2 + CoA. The protein operates within lipid metabolism; fatty acid biosynthesis. Functionally, catalyzes the condensation reaction of fatty acid synthesis by the addition to an acyl acceptor of two carbons from malonyl-ACP. Catalyzes the first condensation reaction which initiates fatty acid synthesis and may therefore play a role in governing the total rate of fatty acid production. Possesses both acetoacetyl-ACP synthase and acetyl transacylase activities. Its substrate specificity determines the biosynthesis of branched-chain and/or straight-chain of fatty acids. The sequence is that of Beta-ketoacyl-[acyl-carrier-protein] synthase III from Campylobacter fetus subsp. fetus (strain 82-40).